Consider the following 178-residue polypeptide: NAD(P)H-quinone oxidoreductase subunit 6, chloroplastic (178 aa).

The next 5 helical transmembrane spans lie at 10–30 (LIVA…VIFF), 33–53 (IVYA…LYLF), 64–84 (ILIY…LISL), 100–120 (ISAF…LQTP), and 148–168 (LLPF…AVSI).

It belongs to the complex I subunit 6 family. In terms of assembly, NDH is composed of at least 16 different subunits, 5 of which are encoded in the nucleus.

The protein resides in the plastid. It is found in the chloroplast thylakoid membrane. It carries out the reaction a plastoquinone + NADH + (n+1) H(+)(in) = a plastoquinol + NAD(+) + n H(+)(out). It catalyses the reaction a plastoquinone + NADPH + (n+1) H(+)(in) = a plastoquinol + NADP(+) + n H(+)(out). NDH shuttles electrons from NAD(P)H:plastoquinone, via FMN and iron-sulfur (Fe-S) centers, to quinones in the photosynthetic chain and possibly in a chloroplast respiratory chain. The immediate electron acceptor for the enzyme in this species is believed to be plastoquinone. Couples the redox reaction to proton translocation, and thus conserves the redox energy in a proton gradient. This Chara vulgaris (Common stonewort) protein is NAD(P)H-quinone oxidoreductase subunit 6, chloroplastic (ndhG).